Reading from the N-terminus, the 334-residue chain is Mediator of RNA polymerase II transcription subunit 4 (334 aa).

The stretch at 71–100 (QEREQLIRTLEAHVEKRDEVIQQLETNLKS) forms a coiled coil. Residues 193–334 (PLITSPSASS…ASKKTGSSNK (142 aa)) are disordered. 2 stretches are compositionally biased toward polar residues: residues 194–206 (LITS…SNGG) and 251–282 (NEKQ…SSPN).

This sequence belongs to the Mediator complex subunit 4 family. As to quaternary structure, component of the Mediator complex.

It localises to the nucleus. Component of the Mediator complex, a coactivator involved in the regulated transcription of nearly all RNA polymerase II-dependent genes. Mediator functions as a bridge to convey information from gene-specific regulatory proteins to the basal RNA polymerase II transcription machinery. Mediator is recruited to promoters by direct interactions with regulatory proteins and serves as a scaffold for the assembly of a functional preinitiation complex with RNA polymerase II and the general transcription factors. This chain is Mediator of RNA polymerase II transcription subunit 4 (mdt-4), found in Caenorhabditis elegans.